Here is a 144-residue protein sequence, read N- to C-terminus: L-fucose mutarotase (144 aa).

Histidine 22 acts as the Proton donor in catalysis. Substrate contacts are provided by residues aspartate 30, arginine 109, and 131–133 (YGN).

Belongs to the RbsD / FucU family. FucU mutarotase subfamily. As to quaternary structure, homodecamer.

The protein resides in the cytoplasm. The enzyme catalyses alpha-L-fucose = beta-L-fucose. Its pathway is carbohydrate metabolism; L-fucose metabolism. Involved in the anomeric conversion of L-fucose. This is L-fucose mutarotase from Actinobacillus pleuropneumoniae serotype 5b (strain L20).